The chain runs to 583 residues: Protein disulfide-isomerase-like protein of the testis (583 aa).

Positions 1–17 are cleaved as a signal peptide; that stretch reads MDLLWMPLLLVAARISA. Residues Asn-58, Asn-128, Asn-160, and Asn-340 are each glycosylated (N-linked (GlcNAc...) asparagine). One can recognise a Thioredoxin domain in the interval 388–451; the sequence is LVKQLVGKNF…IAKIDITAND (64 aa). 2 stretches are compositionally biased toward basic and acidic residues: residues 522–531 and 540–559; these read EVPMMKKELP and NVTK…KTSE. The segment at 522 to 583 is disordered; that stretch reads EVPMMKKELP…KKKPKVKEEL (62 aa). An N-linked (GlcNAc...) asparagine glycan is attached at Asn-540. Basic residues predominate over residues 573-583; sequence QKKKPKVKEEL. A Prevents secretion from ER motif is present at residues 580–583; it reads KEEL.

It belongs to the protein disulfide isomerase family. As to quaternary structure, homodimer. The homodimer is not disulfide-linked. Interacts with ERO1A and CLGN. In terms of processing, N-glycosylated.

It is found in the endoplasmic reticulum. In terms of biological role, probable redox-inactive chaperone involved in spermatogenesis. The protein is Protein disulfide-isomerase-like protein of the testis (PDILT) of Macaca fascicularis (Crab-eating macaque).